Consider the following 429-residue polypeptide: Glutamate-1-semialdehyde 2,1-aminomutase (429 aa).

K267 carries the post-translational modification N6-(pyridoxal phosphate)lysine.

This sequence belongs to the class-III pyridoxal-phosphate-dependent aminotransferase family. HemL subfamily. As to quaternary structure, homodimer. Pyridoxal 5'-phosphate is required as a cofactor.

It is found in the cytoplasm. It carries out the reaction (S)-4-amino-5-oxopentanoate = 5-aminolevulinate. Its pathway is porphyrin-containing compound metabolism; protoporphyrin-IX biosynthesis; 5-aminolevulinate from L-glutamyl-tRNA(Glu): step 2/2. In Xanthomonas axonopodis pv. citri (strain 306), this protein is Glutamate-1-semialdehyde 2,1-aminomutase.